Here is a 122-residue protein sequence, read N- to C-terminus: MKSGFGEGAYFITRSVYRDQFREKLGFDPFPGTLNIEVGDPEIVERIREGAPVIQGGGGFGDVLYVKALLNGVVEGAILFPLKTHHRQGCLEFVAPVNLRKTLKLRDGDTVSLDIDTSEIQE.

4-9 (GFGEGA) lines the CDP pocket. The Mg(2+) site is built by T33 and N35. FMN is bound by residues T84 and E92. 97–100 (VNLR) is a binding site for CDP.

This sequence belongs to the archaeal riboflavin kinase family. Mg(2+) serves as cofactor.

The catalysed reaction is riboflavin + CTP = CDP + FMN + H(+). Its pathway is cofactor biosynthesis; FMN biosynthesis; FMN from riboflavin (CTP route): step 1/1. Catalyzes the CTP-dependent phosphorylation of riboflavin (vitamin B2) to form flavin mononucleotide (FMN). This is Riboflavin kinase from Methanothermobacter thermautotrophicus (strain ATCC 29096 / DSM 1053 / JCM 10044 / NBRC 100330 / Delta H) (Methanobacterium thermoautotrophicum).